The following is a 176-amino-acid chain: Isopentenyl-diphosphate Delta-isomerase 1 (176 aa).

Residues histidine 23 and histidine 30 each contribute to the Mn(2+) site. Residues 28-162 enclose the Nudix hydrolase domain; that stretch reads HLHRAFSCFI…EEFCTPWFKK (135 aa). The active site involves cysteine 65. Cysteine 65 is a binding site for Mg(2+). Histidine 67 serves as a coordination point for Mn(2+). Glutamate 85 is a Mg(2+) binding site. 2 residues coordinate Mn(2+): glutamate 112 and glutamate 114. Glutamate 114 is an active-site residue.

Belongs to the IPP isomerase type 1 family. Homodimer. Mg(2+) is required as a cofactor. Requires Mn(2+) as cofactor.

The protein resides in the cytoplasm. It carries out the reaction isopentenyl diphosphate = dimethylallyl diphosphate. Its pathway is isoprenoid biosynthesis; dimethylallyl diphosphate biosynthesis; dimethylallyl diphosphate from isopentenyl diphosphate: step 1/1. Catalyzes the 1,3-allylic rearrangement of the homoallylic substrate isopentenyl (IPP) to its highly electrophilic allylic isomer, dimethylallyl diphosphate (DMAPP). The sequence is that of Isopentenyl-diphosphate Delta-isomerase 1 from Photorhabdus laumondii subsp. laumondii (strain DSM 15139 / CIP 105565 / TT01) (Photorhabdus luminescens subsp. laumondii).